Consider the following 231-residue polypeptide: Floral homeotic protein PMADS 1 (231 aa).

An MADS-box domain is found at 3 to 58; sequence RGKIQIKRIENQTNRQVTYSKRRNGLFKKANELTVLCDAKVSIIMISSTGKLHEFI. Residues 84–174 form the K-box domain; it reads YEKMQEQLRK…LLEFDARQED (91 aa).

Predominantly expressed in petals and stamens, less in carpels and sepals.

Its subcellular location is the nucleus. In terms of biological role, transcription factor involved in the genetic control of flower development. Necessary for the normal development of petals. Absence of the PMADS1 protein causes transformation of petals into sepals. This chain is Floral homeotic protein PMADS 1 (PMADS1), found in Petunia hybrida (Petunia).